Here is a 192-residue protein sequence, read N- to C-terminus: Large ribosomal subunit protein bL9 (192 aa).

The disordered stretch occupies residues 173–192 (ALRPEDFFDPEADGLDENEA). Acidic residues predominate over residues 179-192 (FFDPEADGLDENEA).

This sequence belongs to the bacterial ribosomal protein bL9 family.

Binds to the 23S rRNA. The protein is Large ribosomal subunit protein bL9 of Rhizobium etli (strain ATCC 51251 / DSM 11541 / JCM 21823 / NBRC 15573 / CFN 42).